Reading from the N-terminus, the 87-residue chain is MSNLNPGELGDLTDASKKEIAAYLDAENSKQKVRTSINQFTDICFKKCISRVDNGNLSSQEEECLASCVNRFLDTNIRVVRGLQNSQ.

Positions 44-68 match the Twin CX3C motif motif; sequence CFKKCISRVDNGNLSSQEEECLASC. 2 disulfide bridges follow: cysteine 44–cysteine 68 and cysteine 48–cysteine 64.

The protein belongs to the small Tim family. As to quaternary structure, heterohexamer; composed of 3 copies of TIM8 and 3 copies of TIM13, named soluble 70 kDa complex. Associates with the TIM22 complex, whose core is composed of TIM22 and TIM54. Interacts with the transmembrane regions of multi-pass transmembrane proteins in transit.

It localises to the mitochondrion inner membrane. Its function is as follows. Mitochondrial intermembrane chaperone that participates in the import and insertion of some multi-pass transmembrane proteins into the mitochondrial inner membrane. Also required for the transfer of beta-barrel precursors from the TOM complex to the sorting and assembly machinery (SAM complex) of the outer membrane. Acts as a chaperone-like protein that protects the hydrophobic precursors from aggregation and guide them through the mitochondrial intermembrane space. The TIM8-TIM13 complex is non essential and only mediates the import of few proteins, while the predominant TIM9-TIM10 70 kDa complex is crucial and mediates the import of much more proteins. The sequence is that of Mitochondrial import inner membrane translocase subunit TIM8 (TIM8) from Candida glabrata (strain ATCC 2001 / BCRC 20586 / JCM 3761 / NBRC 0622 / NRRL Y-65 / CBS 138) (Yeast).